We begin with the raw amino-acid sequence, 1887 residues long: Protein TIC 214 (1887 aa).

The next 6 helical transmembrane spans lie at 18–38 (IINSVVVVGLYYGFLTTFSIG), 64–84 (FITGQLMMFISIYYAPLHLAL), 87–107 (PHTITVLALPYLLFHFFWNNH), 124–144 (LSIQCVFLNNLIFQLFNHFIL), 172–192 (VGWLIGHILFMKWLGLVLVWI), and 221–241 (IFSILLFITCVYYLGRIPSPI). Disordered regions lie at residues 248 to 300 (EASK…EGWD), 785 to 805 (REEQTKREEKKEKDKKEDNKR), and 1569 to 1603 (LPSNKKIKNRSQETKEPPSQRERGSDIENKGNLSP). Residues 256-268 (VESEEERDVEIET) show a composition bias toward acidic residues. Over residues 1578–1597 (RSQETKEPPSQRERGSDIEN) the composition is skewed to basic and acidic residues.

Belongs to the TIC214 family. Part of the Tic complex.

The protein resides in the plastid. The protein localises to the chloroplast inner membrane. Functionally, involved in protein precursor import into chloroplasts. May be part of an intermediate translocation complex acting as a protein-conducting channel at the inner envelope. This Solanum tuberosum (Potato) protein is Protein TIC 214.